The chain runs to 466 residues: Soluble pyridine nucleotide transhydrogenase (466 aa).

36-45 lines the FAD pocket; that stretch reads ERYHNVGGGC.

The protein belongs to the class-I pyridine nucleotide-disulfide oxidoreductase family. Requires FAD as cofactor.

The protein resides in the cytoplasm. The catalysed reaction is NAD(+) + NADPH = NADH + NADP(+). Functionally, conversion of NADPH, generated by peripheral catabolic pathways, to NADH, which can enter the respiratory chain for energy generation. This chain is Soluble pyridine nucleotide transhydrogenase, found in Enterobacter sp. (strain 638).